Here is a 479-residue protein sequence, read N- to C-terminus: MNRNPDQNTFPNITLKIIETYLSRVPSVNEYHMLKLQARNIQKITVFNKDIFVSLVKKNKKRFFSDVNTSASEIKDRILSYFSKQTQTYNIGKLFTIIELQSVLVTTYTDILGVLTIKAPNVISSKISYNVTSMEELARDMLNSMNVAIIDKAKVMGRHNVSSLVKNVNKLMEEYLRRHNKSCICYGSYSLYLINPNILYGDIDILQTNSRTFLIDLAFLIKFITGNNIILSKIPYLRNYMVIKDENDNHIIDSFNIRQDTMNVVPKIFIDNIYIVDPTFQLLNMIKMFSQIDRLEDLSKDPEKFNARMATMLEYVRYTHGIVFDGKRNNMPMKCIIDENNRIVTVTTKDYFSFKKCLVYLDENVLSSDILDLNADTSCDFESVTNSVYLIHDNIMYTYFSNTILLSDKGKVHEISARGLCAHILLYQMLTSGEYKQCLSDLLNSMMNRDKIPIYSHTERDKKPGRHGFINIEKDIIVF.

Catalysis depends on residues Asp202 and Asp204. Ca(2+)-binding residues include Asp202, Asp204, and Asp253.

It belongs to the poxviridae poly(A) polymerase catalytic subunit family. Heterodimer of a large (catalytic) subunit and a small (regulatory) subunit.

The catalysed reaction is RNA(n) + ATP = RNA(n)-3'-adenine ribonucleotide + diphosphate. Functionally, polymerase that creates the 3'-poly(A) tail of mRNA's. In Bos taurus (Bovine), this protein is Poly(A) polymerase catalytic subunit (OPG063).